The following is a 128-amino-acid chain: Aspartate 1-decarboxylase (128 aa).

S25 functions as the Schiff-base intermediate with substrate; via pyruvic acid in the catalytic mechanism. S25 is modified (pyruvic acid (Ser)). T57 contributes to the substrate binding site. Y58 acts as the Proton donor in catalysis. G73–A75 contributes to the substrate binding site.

It belongs to the PanD family. As to quaternary structure, heterooctamer of four alpha and four beta subunits. It depends on pyruvate as a cofactor. Is synthesized initially as an inactive proenzyme, which is activated by self-cleavage at a specific serine bond to produce a beta-subunit with a hydroxyl group at its C-terminus and an alpha-subunit with a pyruvoyl group at its N-terminus.

It localises to the cytoplasm. It carries out the reaction L-aspartate + H(+) = beta-alanine + CO2. It participates in cofactor biosynthesis; (R)-pantothenate biosynthesis; beta-alanine from L-aspartate: step 1/1. Functionally, catalyzes the pyruvoyl-dependent decarboxylation of aspartate to produce beta-alanine. The sequence is that of Aspartate 1-decarboxylase from Burkholderia lata (strain ATCC 17760 / DSM 23089 / LMG 22485 / NCIMB 9086 / R18194 / 383).